Reading from the N-terminus, the 644-residue chain is Tubulin--tyrosine ligase-like protein 12 (644 aa).

Residues 1 to 13 (MEAERGPERRPAE) are compositionally biased toward basic and acidic residues. A disordered region spans residues 1 to 25 (MEAERGPERRPAERSSPGQTPEEGA). Positions 300–644 (PHGHIFKVYT…PGGCHVTCLV (345 aa)) constitute a TTL domain. ATP is bound by residues 450–453 (SKYI), Lys-468, and Asp-470.

Belongs to the tubulin--tyrosine ligase family. Interacts with MAVS; the interaction prevents MAVS binding to TBK1 and IKBKE. Interacts (via N-terminus) with TBK1 (via protein kinase domain). Interacts (via TTL domain) with IKBKE (via protein kinase domain). Interacts with tubulin alpha. Interacts with histone H3 and histone H4 (when trimethylated at 'Lys-20' (H4K20me3)). Interacts with CBX3. In terms of tissue distribution, expressed in the basal layer of prostate and endothelial cells. Increased expression in prostatic intraepithelial neoplasia and metastatic lesions.

It is found in the cytoplasm. It localises to the midbody. The protein resides in the cytoskeleton. Its subcellular location is the microtubule organizing center. The protein localises to the centrosome. It is found in the spindle. It localises to the nucleus. Negatively regulates post-translational modifications of tubulin, including detyrosination of the C-terminus and polyglutamylation of glutamate residues. Also, indirectly promotes histone H4 trimethylation at 'Lys-20' (H4K20me3). Probably by controlling tubulin and/or histone H4 post-translational modifications, plays a role in mitosis and in maintaining chromosome number stability. During RNA virus-mediated infection, acts as a negative regulator of the RIG-I pathway by preventing MAVS binding to TBK1 and IKBKE. The sequence is that of Tubulin--tyrosine ligase-like protein 12 (TTLL12) from Homo sapiens (Human).